Consider the following 216-residue polypeptide: Nicotinamidase (216 aa).

Residue Asp8 is part of the active site. Residues Asp51, His53, and His94 each coordinate Zn(2+). The active site involves Lys122. Residue Cys167 is the Nucleophile of the active site.

The protein belongs to the isochorismatase family.

It is found in the cytoplasm. The protein localises to the nucleus. It localises to the peroxisome. It catalyses the reaction nicotinamide + H2O = nicotinate + NH4(+). It functions in the pathway cofactor biosynthesis; nicotinate biosynthesis; nicotinate from nicotinamide: step 1/1. With respect to regulation, inhibited by N-ethylmaleimide, HgCl(2) and PCMB. Competitively inhibited by NAD, NMN and 3-acetylpyridine. In terms of biological role, catalyzes the deamidation of nicotinamide, an early step in the NAD(+) salvage pathway. Positively regulates SIR2-mediated silencing and longevity by preventing the accumulation of intracellular nicotinamide, an inhibitor of SIR2, during times of stress. Also acts on nicotinyl hydroxamate. This chain is Nicotinamidase (PNC1), found in Saccharomyces cerevisiae (strain ATCC 204508 / S288c) (Baker's yeast).